The sequence spans 254 residues: Low affinity immunoglobulin gamma Fc region receptor III-A (254 aa).

A signal peptide spans 1 to 20 (MWHLLPPSALLLLISSVTKA). Topologically, residues 21–209 (ADPSKAVVLL…IAPLFPLWQQ (189 aa)) are extracellular. Ig-like C2-type domains are found at residues 23 to 104 (PSKA…VQLQ) and 121 to 174 (KGES…YYCR). Asparagine 42, asparagine 63, asparagine 166, and asparagine 181 each carry an N-linked (GlcNAc...) asparagine glycan. 2 disulfide bridges follow: cysteine 47/cysteine 90 and cysteine 129/cysteine 173. A helical transmembrane segment spans residues 210–230 (IAFCLMMGLLFAVDTGLYFFV). At 231 to 254 (RRDLRRSMVHKEEYNFKWSQAQDK) the chain is on the cytoplasmic side.

In terms of assembly, forms a heterooligomeric complex with ITAM-containing signaling subunits FCER1G. Interacts (via transmembrane domain) with signaling subunits; this interaction is a prerequisite for receptor complex expression on the cell surface and intracellular signal transduction. Binds the Fc region of antigen-complexed IgG. Post-translationally, N-glycosylated. Phosphorylated following receptor ligation.

The protein localises to the cell membrane. Functionally, receptor for the invariable Fc fragment of immunoglobulin gamma (IgG). Binds with intermediate affinity to both IgG2a and IgG2b. Can bind to IgG2a and IgG2b monomers. Does not display binding to IgG1 or IgG3. Recognizes neutralizing virus-specific IgGs displayed on the cell surface of infected cells and triggers antibody-dependent cellular cytotoxicity (ADCC). Confers protection to lethal influenza virus infection. On splenic dendritic cells, uptakes antigen immune complexes and efficiently divert them into MHC class I and II antigen presentation pathways to provide for superior priming of CD4-positive and CD8-positive T cell immune responses. Mediates neutrophil activation by IgG complexes redundantly with FCGR2A. Plays a role in promoting bone resorption by enhancing osteoclast differentiation following binding to IgG2a. Also acts as a receptor for the Fc region of immunoglobulin epsilon (IgE). Binds with low affinity to both the a and b allotypes of IgE. Has also been shown to bind to IgE allotype a only but not to allotype b. Binds aggregated IgE but not the monomeric form and bound monomeric IgG is readily displaced by IgE complexes. Binding to IgE promotes macrophage-mediated phagocytosis, antigen presentation to T cells, production of pro-inflammatory cytokines and the late phase of cutaneous allergic reactions. Mediates enhanced ADCC in response to afucosylated IgGs. The chain is Low affinity immunoglobulin gamma Fc region receptor III-A from Cavia porcellus (Guinea pig).